The following is a 353-amino-acid chain: N-formyl peptide receptor 3 (353 aa).

The Extracellular segment spans residues 1 to 27 (METNFSIPLNETEEVLPEPAGHTVLWI). N-linked (GlcNAc...) asparagine glycans are attached at residues Asn4 and Asn10. Residues 28 to 50 (FSLLVHGVTFVFGVLGNGLVIWV) traverse the membrane as a helical segment. The Cytoplasmic portion of the chain corresponds to 51–61 (AGFRMTRTVNT). A helical transmembrane segment spans residues 62–83 (ICYLNLALADFSFSAILPFRMV). Topologically, residues 84–100 (SVAMREKWPFGSFLCKL) are extracellular. Cysteines 98 and 176 form a disulfide. A helical membrane pass occupies residues 101–121 (VHVMIDINLFVSVYLITIIAL). Topologically, residues 122–140 (DRCICVLHPAWAQNHRTMS) are cytoplasmic. A helical membrane pass occupies residues 141–162 (LAKRVMTGLWIFTIVLTLPNFI). Over 163 to 205 (FWTTISTTNGDTYCIFNFAFWGDTAVERLNVFITMAKVFLILH) the chain is Extracellular. The helical transmembrane segment at 206 to 226 (FIIGFSVPMSIITVCYGIIAA) threads the bilayer. The Cytoplasmic segment spans residues 227–242 (KIHRNHMIKSSRPLRV). Residues 243 to 266 (FAAVVASFFICWFPYELIGILMAV) traverse the membrane as a helical segment. Topologically, residues 267 to 286 (WLKEMLLNGKYKIILVLINP) are extracellular. A helical membrane pass occupies residues 287–306 (TSSLAFFNSCLNPILYVFMG). Residues 307 to 353 (RNFQERLIRSLPTSLERALTEVPDSAQTSNTDTTSASPPEETELQAM) lie on the Cytoplasmic side of the membrane. A disordered region spans residues 327 to 353 (EVPDSAQTSNTDTTSASPPEETELQAM). The segment covering 331–343 (SAQTSNTDTTSAS) has biased composition (polar residues).

The protein belongs to the G-protein coupled receptor 1 family. Detected in various tissues with highest expression in lung.

The protein resides in the cell membrane. In terms of biological role, low affinity receptor for N-formyl-methionyl peptides, which are powerful neutrophils chemotactic factors. Binding of FMLP to the receptor causes activation of neutrophils. This response is mediated via a G-protein that activates a phosphatidylinositol-calcium second messenger system. Acts as a receptor for humanin. This Homo sapiens (Human) protein is N-formyl peptide receptor 3 (FPR3).